Consider the following 532-residue polypeptide: Telomerase Cajal body protein 1 (532 aa).

The tract at residues 1–48 (MKTSEELRLAPDSLPSDLVPAPVLQASPADKNTDSEPVPPPCGGDDQL) is disordered. Residues S27, S61, and S83 each carry the phosphoserine modification. Residues 83–115 (SPRIEEQEVPENASLPVEETNRPELESGEAMEG) form a disordered region. WD repeat units follow at residues 151 to 190 (RSENFLKGCKWAPDGSCILTNSADNVLRIYNLPPELYSES), 206 to 251 (EGDT…LRAS), 256 to 297 (NHLD…RDCE), 307 to 348 (GQSG…ALLG), 349 to 389 (GHQG…HLLW), and 395 to 434 (VTTNQRIYFDLDPSGQFLVSGNTSGVVSVWDISGAFSDCK). The residue at position 474 (T474) is a Phosphothreonine. The residue at position 476 (S476) is a Phosphoserine. The segment at 505–532 (CGGGPDPSNPDEDQDEKGQGRTEAVGMS) is disordered.

This sequence belongs to the TCAB1 family. As to quaternary structure, component of the telomerase holoenzyme complex composed of one molecule of TERT, one molecule of WRAP53/TCAB1, two molecules of H/ACA ribonucleoprotein complex subunits DKC1, NOP10, NHP2 and GAR1, and a telomerase RNA template component (TERC). The telomerase holoenzyme complex is associated with TEP1, SMG6/EST1A and POT1. Interacts with the chaperonin-containing T-complex (TRiC) complex; which mediates the folding of WRAP53/TCAB1. Interacts with COIL. Interacts with SMN1. Interacts with RNF8. Interacts with histone H2AX. In terms of processing, phosphorylated at Ser-61 by ATM in response to DNA damage, promoting its interaction with histone H2AX and localization to sites of DNA double-strand breaks.

The protein resides in the nucleus. It localises to the cajal body. It is found in the chromosome. The protein localises to the telomere. In terms of biological role, RNA chaperone that plays a key role in telomere maintenance and RNA localization to Cajal bodies. Specifically recognizes and binds the Cajal body box (CAB box) present in both small Cajal body RNAs (scaRNAs) and telomerase RNA template component (TERC). Essential component of the telomerase holoenzyme complex, a ribonucleoprotein complex essential for the replication of chromosome termini that elongates telomeres in most eukaryotes. In the telomerase holoenzyme complex, required to stimulate the catalytic activity of the complex. Acts by specifically binding the CAB box of the TERC RNA and controlling the folding of the CR4/CR5 region of the TERC RNA, a critical step for telomerase activity. In addition, also controls telomerase holoenzyme complex localization to Cajal body. During S phase, required for delivery of TERC to telomeres during S phase and for telomerase activity. In addition to its role in telomere maintenance, also required for Cajal body formation, probably by mediating localization of scaRNAs to Cajal bodies. Also plays a role in DNA repair: phosphorylated by ATM in response to DNA damage and relocalizes to sites of DNA double-strand breaks to promote the repair of DNA double-strand breaks. Acts by recruiting the ubiquitin ligase RNF8 to DNA breaks and promote both homologous recombination (HR) and non-homologous end joining (NHEJ). The sequence is that of Telomerase Cajal body protein 1 from Rattus norvegicus (Rat).